The chain runs to 43 residues: Protein PsbN (43 aa).

A helical membrane pass occupies residues 7 to 27; sequence VAIFISGLLVSFTGYALYTAF.

The protein belongs to the PsbN family.

The protein resides in the plastid. The protein localises to the chloroplast thylakoid membrane. Its function is as follows. May play a role in photosystem I and II biogenesis. This chain is Protein PsbN, found in Daucus carota (Wild carrot).